Consider the following 173-residue polypeptide: Alpha-crystallin A chain (173 aa).

Met-1 is modified (N-acetylmethionine). The segment at 1-63 (MDIAIQHPWF…RTVLDSGISE (63 aa)) is required for complex formation with BFSP1 and BFSP2. Residue Gln-6 is modified to Deamidated glutamine; partial. Ser-45 bears the Phosphoserine mark. A Deamidated glutamine; partial modification is found at Gln-50. Positions 52 to 162 (LFRTVLDSGI…GHSERAIPVS (111 aa)) constitute a sHSP domain. N6-acetyllysine is present on Lys-70. At Gln-90 the chain carries Deamidated glutamine; partial. Lys-99 is modified (N6-acetyllysine). His-100 is a binding site for Zn(2+). A Deamidated asparagine; partial modification is found at Asn-101. Zn(2+) is bound by residues Glu-102 and His-107. A Phosphoserine modification is found at Ser-122. Asn-123 bears the Deamidated asparagine; partial mark. Residues 144 to 173 (PKVPSGVDAGHSERAIPVSREEKPSSAPSS) are disordered. The segment covering 153–167 (GHSERAIPVSREEKP) has biased composition (basic and acidic residues). His-154 provides a ligand contact to Zn(2+). Ser-162 is a glycosylation site (O-linked (GlcNAc) serine).

The protein belongs to the small heat shock protein (HSP20) family. Heteromer composed of three CRYAA and one CRYAB subunits. Inter-subunit bridging via zinc ions enhances stability, which is crucial as there is no protein turn over in the lens. Can also form homodimers and homotetramers (dimers of dimers) which serve as the building blocks of homooligomers. Within homooligomers, the zinc-binding motif is created from residues of 3 different molecules. His-100 and Glu-102 from one molecule are ligands of the zinc ion, and His-107 and His-154 residues from additional molecules complete the site with tetrahedral coordination geometry. Part of a complex required for lens intermediate filament formation composed of BFSP1, BFSP2 and CRYAA. In terms of processing, acetylation at Lys-70 may increase chaperone activity. Undergoes age-dependent proteolytical cleavage at the C-terminus.

The protein resides in the cytoplasm. It localises to the nucleus. In terms of biological role, contributes to the transparency and refractive index of the lens. Acts as a chaperone, preventing aggregation of various proteins under a wide range of stress conditions. Required for the correct formation of lens intermediate filaments as part of a complex composed of BFSP1, BFSP2 and CRYAA. In Pteropus poliocephalus (Grey-headed flying fox), this protein is Alpha-crystallin A chain (CRYAA).